The primary structure comprises 125 residues: Natriuretic peptide GNP1 (125 aa).

The N-terminal stretch at 1 to 25 (MDPRLVRAGSLVLLLALLVQDQGAA) is a signal peptide. Disordered stretches follow at residues 23–78 (GAAH…PAFK) and 105–125 (VSGM…TGKK). The propeptide occupies 26–85 (HPARAGQKYKPLIRRSEEDSQALGQEGDVAARAADEEEDAAGPGDALRQPAFKTLLASRE). Cysteine 94 and cysteine 110 are oxidised to a cystine.

It belongs to the natriuretic peptide family. In terms of tissue distribution, expressed by the venom gland.

It localises to the secreted. In terms of biological role, exhibits natriuretic and vasodepressor activity. Acts by stimulating cGMP. This is Natriuretic peptide GNP1 from Varanus varius (Lace monitor lizard).